We begin with the raw amino-acid sequence, 218 residues long: MGQKINPLGFRLGTTQSHHSVWFAQPKKYSEGLEEDKKIRDCIKNYVQKNIRISSGMEGIARIEIQKRIDLIQIIIYMGFPKLLIEDKPRRVEELQMNVQKELNCVNRKLNIAITRISNPYGQPNILAEFIAGQLKNRVSFRKAMKKAIELTEQANTKGIQVQIAGRIDGKEIARVEWIREGRVPLQTIDAKIDYCSYTVRTIYGVLGIKIWIFVDEE.

The region spanning 47-118 (VQKNIRISSG…KLNIAITRIS (72 aa)) is the KH type-2 domain.

This sequence belongs to the universal ribosomal protein uS3 family. Part of the 30S ribosomal subunit.

Its subcellular location is the plastid. The protein resides in the chloroplast. The polypeptide is Small ribosomal subunit protein uS3c (rps3) (Arabis hirsuta (Hairy rock-cress)).